Here is a 94-residue protein sequence, read N- to C-terminus: Large ribosomal subunit protein uL23 (94 aa).

The protein belongs to the universal ribosomal protein uL23 family. In terms of assembly, part of the 50S ribosomal subunit. Contacts protein L29, and trigger factor when it is bound to the ribosome.

Functionally, one of the early assembly proteins it binds 23S rRNA. One of the proteins that surrounds the polypeptide exit tunnel on the outside of the ribosome. Forms the main docking site for trigger factor binding to the ribosome. The chain is Large ribosomal subunit protein uL23 from Akkermansia muciniphila (strain ATCC BAA-835 / DSM 22959 / JCM 33894 / BCRC 81048 / CCUG 64013 / CIP 107961 / Muc).